We begin with the raw amino-acid sequence, 189 residues long: Pyridoxal 5'-phosphate synthase subunit PdxT (189 aa).

48–50 (GES) is an L-glutamine binding site. The active-site Nucleophile is Cys80. L-glutamine is bound by residues Arg107 and 136-137 (IR). Active-site charge relay system residues include His172 and Glu174.

Belongs to the glutaminase PdxT/SNO family. In terms of assembly, in the presence of PdxS, forms a dodecamer of heterodimers. Only shows activity in the heterodimer.

The enzyme catalyses aldehydo-D-ribose 5-phosphate + D-glyceraldehyde 3-phosphate + L-glutamine = pyridoxal 5'-phosphate + L-glutamate + phosphate + 3 H2O + H(+). It catalyses the reaction L-glutamine + H2O = L-glutamate + NH4(+). It functions in the pathway cofactor biosynthesis; pyridoxal 5'-phosphate biosynthesis. Catalyzes the hydrolysis of glutamine to glutamate and ammonia as part of the biosynthesis of pyridoxal 5'-phosphate. The resulting ammonia molecule is channeled to the active site of PdxS. The protein is Pyridoxal 5'-phosphate synthase subunit PdxT of Ruminiclostridium cellulolyticum (strain ATCC 35319 / DSM 5812 / JCM 6584 / H10) (Clostridium cellulolyticum).